Here is a 428-residue protein sequence, read N- to C-terminus: Glutamate-1-semialdehyde 2,1-aminomutase 2 (428 aa).

An N6-(pyridoxal phosphate)lysine modification is found at Lys267.

The protein belongs to the class-III pyridoxal-phosphate-dependent aminotransferase family. HemL subfamily. In terms of assembly, homodimer. The cofactor is pyridoxal 5'-phosphate.

The protein localises to the cytoplasm. The enzyme catalyses (S)-4-amino-5-oxopentanoate = 5-aminolevulinate. The protein operates within porphyrin-containing compound metabolism; protoporphyrin-IX biosynthesis; 5-aminolevulinate from L-glutamyl-tRNA(Glu): step 2/2. The polypeptide is Glutamate-1-semialdehyde 2,1-aminomutase 2 (Oceanobacillus iheyensis (strain DSM 14371 / CIP 107618 / JCM 11309 / KCTC 3954 / HTE831)).